Here is a 400-residue protein sequence, read N- to C-terminus: Phosphoglycerate kinase (400 aa).

Substrate contacts are provided by residues 22 to 24 (DFN), R38, 61 to 64 (HLGR), R119, and R152. ATP is bound by residues K205, G296, E327, and 353–356 (GGDT).

This sequence belongs to the phosphoglycerate kinase family. As to quaternary structure, monomer.

It is found in the cytoplasm. The catalysed reaction is (2R)-3-phosphoglycerate + ATP = (2R)-3-phospho-glyceroyl phosphate + ADP. It functions in the pathway carbohydrate degradation; glycolysis; pyruvate from D-glyceraldehyde 3-phosphate: step 2/5. The polypeptide is Phosphoglycerate kinase (Campylobacter lari (strain RM2100 / D67 / ATCC BAA-1060)).